A 244-amino-acid chain; its full sequence is Ubiquinone/menaquinone biosynthesis C-methyltransferase UbiE (244 aa).

Residues threonine 70, aspartate 91, and 117–118 (DA) each bind S-adenosyl-L-methionine.

The protein belongs to the class I-like SAM-binding methyltransferase superfamily. MenG/UbiE family.

It catalyses the reaction a 2-demethylmenaquinol + S-adenosyl-L-methionine = a menaquinol + S-adenosyl-L-homocysteine + H(+). The enzyme catalyses a 2-methoxy-6-(all-trans-polyprenyl)benzene-1,4-diol + S-adenosyl-L-methionine = a 5-methoxy-2-methyl-3-(all-trans-polyprenyl)benzene-1,4-diol + S-adenosyl-L-homocysteine + H(+). The protein operates within quinol/quinone metabolism; menaquinone biosynthesis; menaquinol from 1,4-dihydroxy-2-naphthoate: step 2/2. Its pathway is cofactor biosynthesis; ubiquinone biosynthesis. In terms of biological role, methyltransferase required for the conversion of demethylmenaquinol (DMKH2) to menaquinol (MKH2) and the conversion of 2-polyprenyl-6-methoxy-1,4-benzoquinol (DDMQH2) to 2-polyprenyl-3-methyl-6-methoxy-1,4-benzoquinol (DMQH2). The protein is Ubiquinone/menaquinone biosynthesis C-methyltransferase UbiE of Nitrosospira multiformis (strain ATCC 25196 / NCIMB 11849 / C 71).